The chain runs to 3916 residues: MADNQSLPKEPIAIIGTSCRFPGGANTPSKLWDLLCEKRDVQSRIPNDRFNVDAFYSTNGDKNGCTDVKRAYLLSEDIRVFDASFFKINPREAEAMDPQQRLLLEAVYEATEAAGLPMEDLKGSDTAVYVGCMTGDYHEMLMRDPQDMPKYMATGTARSILSNRISYLFDWKGPSMTIDTACSSSLVAVYDAVTALRNGVSKIACAGGANLILGPEMMISESKLHMLSPTGRSRMWDASANGYARGEGVAAIMMKTLSQALADGDHIQGVIREIGVNSDGRTNGITLPSPEAQKFLIRQTYKKAGLDVFKDRCQFFEAHGTGTPAGDPLEARAIHEAFFTDGDIVSEPMYVGSVKTAIGHLEGCAGLAGLIKALEAVKRGVIPPNQLFENLNPALKPYVSNLRLPTESKPWPKLAPGSARRASVNSFGFGGTNVHAIIEQFDHAQREASSADGIISTPLVLSANSDLSLRKQIAHFAEAIEHNDKGEVDRIIFTLAQRRSQLPLRAYFSGHGLQSIQQKLRDATAENAVLPFISQTVPPGQPPRILGVFTGQGAQWPTMGREILKASPFARTVMASLEESLASLAEPPIWTLTEQIMADKDFSRLSEAAISQPLCTAVQIMVVELLRKAGIAFNCVIGHSSGEITAAYTAGFLSATDAIRVAYLRGVCAKLAGGGNGETGSMMAVGLSYEEASAFCEENFAGLVDVAASNAPASTTLSGDKPSIEEAKASLDAQGTFARILKVDTAYHSHHMNPCAQPYLEKLQAAGVKSLPGDDSVEWYSSVLGERITASLHSEALCDEYWVENMVNPVLFSVASELVAEANPPCHVALEVGPHPALKGPFNQTYKRATGSPLPYHGTVTRNIHDVEALSNSLGFLWSHLGKSAVDFTAYTQSFSPSITAMADGLPPYAWDHTQSFWRESRKSLNYRQRTQPPHPLLGARSVEDTADSMRWINYLRLDDVPWLEGHKVEGQVVYPAAGYLVMAMEAARAIDASKEIQLTELSDVHILSAIQLTEGSQALETVFTLQVERNEPTFATASWTLSTPMSGRNDSWKSNAKGQLRVEFSSLDDAARLPSRSKPIASLTSVDMERFYSALANIGLEYTGEFKQLKSIDRQLGLATAHVGQVVPDFPAMIHPALLDGAFQSIFAAYCWPDDGSLQAPFVPTFFRSLRIANTSHLRHGEDLVIDSFLTNTNERELTADMDIFQSAEGQPVLQLQGLTCTSLLRPGPSNAKELYTKTEWEVDIASGIAQSDTQDQDTASDLELVDLCERLSYFYLRELNKAVGREEVSGFDWHYQRIFEWIDHLFPLIQSGRHPTIKTEWSSDSRDWLMQQSARFPGRIDLQLIQAVGENLPAVVRKQTTMLEHMVKDDMLNRIYKFGLGFERANVYLGRISKQIAHRYPRMNILEIGAGTGGATKGIMESLGTAFETYTFTDISTGFFEAAAEAFDHWADKMIFKPLNIESDPTDQGFPQGHYDFIIASNVLHATKSLAVTMRNTRKLLKPGGQLLLLEVTSDIVRVKLMMSGLSGWWLGGDDGRRYGPTIPVSQWDALLKQTGFSGVDKTVNDFVDAEKYMTSVMLSQAVDDRMEILRQPRLASSHWLSSQSITVVGGHCQDIGKDAMAIIHQMGHASSKPVIHHVGSFEELASSNIQTRSALVLEDLDEPILKDLTEDKLRGVQRLINESRQVLWVSRGCQKDEPFANMSIGMCRSLSSEYPHIHLQHVDIEGLVGPMTASLLVDAFLQLMYRASLKSDDLVWSIEAELVLREDKWFIPRVKSDEALNNQLNASKMTIRSVKTLHGDAVEIQQRSNQFVIAEPIPCIPVSASSPPVAITVTHSLLFPFQVGTKSSGYLCYGYIDSQPQTRVLAISGVNRSKISVPPFFVWDLSSSEIDAADLLRKTALAITADRLLSDFEAGATVLIHESDENLGAALQWKAAELDLNVILTTSESSMERSTDSLFIHALAPERLVNHIMPQCTKAVIDLSGRDYRIVDSPLRRCLPAHCKFHQLQDILGNASQGVNDPIIHGVRDASRSTLQLSGDGPVINLSDLSNMRPSIKDYATIVEFSVDTTIPAVVQPLEGSQLFRSDKTYLLIGFTGGLGKALCRWMVSCGVRHLALTTRNVAAIDQVWLQELRIQGAQVNLYQADVSDKAALSQAYDQIVKEMPPVCGAANAALLLSDRTFTELKVKDFTQVFGPKVKGTQNLHELLLDQKLDFFIMFSSLASVVGNRGQANYAASNLFMSAIAEQRRAKGLAASVMHIGMVLGVGYVSSTGAYEATLRSSNYMAISETDLLNMFSQAILVGQPSSTHAPELITGLNRFSLEPEAQKYFWRDNMRFCHHTLEEEHQERTSTTKVSISQRLSETKGTAEILAVVEEEFCTKLERLLQAEAGSVKTSQSLLGLGVDSLVAAEIRSWFLKELEVDTPVLEILNTASITELCSTVVSHLPTISEDTETKTEVTKQAIKTLNVVETSTVVSSASPTENEPFTIRNSPNSTQVTSESGVDEETSIQSKIDRSGPLSFAQERLWFLQQFLRDHSTYNVTMHYHISGPLRLHDLERAFQQVIHRHESLRTSFFIDPDTDLPTQAVLKDSSFRLEQKHNSTAKIEYKAMQGMSYDLENGNVVKAVIVPDSDGEFDLIFGFHHIALDGYSAQIMVRDLAMIYAGQTLSSKQQDYLDFAIAQKAAKVPYTTLAYWRSELEDLPPTLTVFDFAETKTRIPLTDYTTRALERRLSIEQSRSIKAVAKRLDVTPFHVHLATLQVVLSDLASANDLCIGITDANKNDATHIDTVGFFVNLLPLRLKLSSSQTLADLVANAKSKANGALSHSDMPFDVLLDEMKLPRSTTHSPLFQVVMNYKMGSTQKVPLADCQAQLVAFEDANNPYDLTFDIETYYDGSASISVKTQEYLYSESELSFVLDNYVEKLDLFTSEPSQTVDQICKPTAEQIGKALTLGRGERIPSPRLETLSHYFEKCVVNQPDDVALVTDKGQALTWSQLKALVNQIAMALVEAGAKQDSQVGVYCDPSMYILPTLIAIAEIGGVYVPLDTQNPIKRLQLMVDDCQADVLLIDDSTATLSLELETKAKMINVNTIKAGPSNTFHLDNRARGNGMGYIFYTSGTTGVPKAVALTHTSLVHHFDGFIHCNNLNKCRMLQQAPLGFDMSLTQMTLAIMLGGTLIVASSETRKDPTQLAQLMLDEKVTHTFMTPTLALSVIHHGYEYLRQCVDWEHASLAGEAMTTRVTSEFKRLGLRNLELCNGYGPTEITIIATCGSNELGDTLRDTHNPSIGRALPNYSCYILDENMQPVRPGLAGELVIGGAGVAIGYLNRQDLTEAKFLSDPFAPPEDVARGWTRMYRTGDKARFLSDGRLCFLGRIAGDSQIKLRGFRIELQDIASTIVKASDGKVPEAAVSLRGEGDSAYLVAFVILSQFNRPSDEKGYLKQLLEELSLPRYMKPAKIISISQLPMNASGKLDQYALDALPVSYEKDIVDKPLTETQERLKLGWLKALPFVDAAIGPDTDFFSAGGNSLRIVSLREYITREFGVTVSVFDLFQASTLGEMAAKIDGFTTQEATTISIDWEEETRIDADLNIVGVQEPLPSEATNGLQVALTGATGFLGVSILETLLEDKRVSKVHCLAVRSSSNTSDPVFSSSRVACYPGDLSLPRLGLSQEQFDQLANAVDRIIHNGADVSFLKTYQSLQRSNVSSSRELARMAITRRIPMHFVSTGGVVQLTGQDGLDEVSVIDSTPPNDGSLGYVASKWASEAILEKYASQYNLPVWIHRPSNITGPNAPKADLMQNIFHYSAKTASLPDLASWSGCFDFVPVDVVAAGIASSIYETQETVAYKHHCGTEKISVEDLPSYLEAKHGKIETVSIEEWLERSKAAGLDEVTAVLVEKTLSRGGIVPWLRREAN.

A Ketosynthase family 3 (KS3) domain is found at 9–440 (KEPIAIIGTS…GTNVHAIIEQ (432 aa)). Active-site for beta-ketoacyl synthase activity residues include Cys182, His319, and His360. The interval 548-869 (VFTGQGAQWP…VTRNIHDVEA (322 aa)) is malonyl-CoA:ACP transacylase (MAT) domain. Residues 935–1068 (HPLLGARSVE…GQLRVEFSSL (134 aa)) form an N-terminal hotdog fold region. The tract at residues 935 to 1228 (HPLLGARSVE…GLTCTSLLRP (294 aa)) is dehydratase (DH) domain. Positions 935 to 1231 (HPLLGARSVE…CTSLLRPGPS (297 aa)) constitute a PKS/mFAS DH domain. The active-site Proton acceptor; for dehydratase activity is the His967. The segment at 1084–1231 (LTSVDMERFY…CTSLLRPGPS (148 aa)) is C-terminal hotdog fold. The active-site Proton donor; for dehydratase activity is the Asp1141. The segment at 1350-1584 (VGENLPAVVR…YMTSVMLSQA (235 aa)) is C-methyltransferase (CMeT) domain. A ketoreductase (KR) domain 1 region spans residues 2092-2266 (TYLLIGFTGG…AASVMHIGMV (175 aa)). Positions 2372-2449 (EILAVVEEEF…ELCSTVVSHL (78 aa)) constitute a Carrier 1 domain. Ser2409 is modified (O-(pantetheine 4'-phosphoryl)serine). The segment at 2482 to 2511 (ASPTENEPFTIRNSPNSTQVTSESGVDEET) is disordered. Polar residues predominate over residues 2486-2505 (ENEPFTIRNSPNSTQVTSES). Residues 2522 to 2806 (PLSFAQERLW…VNLLPLRLKL (285 aa)) form a condensation region. The tract at residues 2973–3385 (FEKCVVNQPD…RIAGDSQIKL (413 aa)) is adenylation. One can recognise a Carrier 2 domain in the interval 3493-3570 (KPLTETQERL…EMAAKIDGFT (78 aa)). Residue Ser3530 is modified to O-(pantetheine 4'-phosphoryl)serine. A thiolester reductase (R) domain region spans residues 3612–3833 (LTGATGFLGV…DFVPVDVVAA (222 aa)).

This sequence in the C-terminal section; belongs to the NRP synthetase family.

It participates in mycotoxin biosynthesis. Functionally, fusarin C synthetase; part of the gene cluster that mediates the biosynthesis of the mycotoxin fusarin C. Within the cluster, FUS1, FUS2, FUS8 and FUS9 are sufficient for fusarin production. The roles of the other FUS members are yet undetermined. The fusarin C synthetase FUS1 is responsible for the condensation of one acetyl-coenzyme A (CoA) unit with six malonyl-CoA units and the amide linkage of the arising heptaketide and homoserine, subsequently releasing the first intermediate, prefusarin, as an alcohol with an open ring structure. The cytochrome P450 monooxygenase FUS8 participates in multiple oxidation processes at carbon C-20 and is able to use the FUS1 product as substrate, resulting in formation of 20-hydroxy-prefusarin. This reaction seems to be essential before the 2-pyrrolidone ring closure can be catalyzed by FUS2, generating 20-hydroxy-fusarin. FUS8 is able to further oxidizes carbon C-20 after ring closure, resulting in the formation of carboxy-fusarin C. As the last step, FUS9 methylates the hydroxyl group at C-21 to generate fusarin C. Fusarin C can then rearrange to epi-fusarin C, the (z)-isomers, and fusarin A and fusarin D. This Gibberella moniliformis (strain M3125 / FGSC 7600) (Maize ear and stalk rot fungus) protein is Fusarin C synthetase.